The sequence spans 109 residues: Aquaporin-2 (109 aa).

The Cytoplasmic segment spans residues 1–6 (SIAFSR). A helical transmembrane segment spans residues 7–27 (AVFAEFLATLIFVFFGLGSAL). Residues 28-35 (NWQQSLPS) lie on the Extracellular side of the membrane. The chain crosses the membrane as a helical span at residues 36 to 54 (VLQIAMAFGLAIGTLVQAL). At 55 to 59 (GHISG) the chain is on the cytoplasmic side. An intramembrane region (discontinuously helical) is located at residues 60–69 (AHINPAVTVA). Positions 63–65 (NPA) match the NPA 1 motif. Residues 70-80 (CLVGCHVSFLR) are Cytoplasmic-facing. A helical membrane pass occupies residues 81 to 102 (AAFYVAAQLLGAVAGAALLHEV). The Extracellular portion of the chain corresponds to 103–109 (TPSDVRG).

Belongs to the MIP/aquaporin (TC 1.A.8) family. Homotetramer. Serine phosphorylation is necessary and sufficient for expression at the apical membrane. Endocytosis is not phosphorylation-dependent. Post-translationally, N-glycosylated.

It localises to the apical cell membrane. Its subcellular location is the basolateral cell membrane. The protein resides in the cell membrane. The protein localises to the cytoplasmic vesicle membrane. It is found in the golgi apparatus. It localises to the trans-Golgi network membrane. The catalysed reaction is H2O(in) = H2O(out). The enzyme catalyses glycerol(in) = glycerol(out). Functionally, forms a water-specific channel that provides the plasma membranes of renal collecting duct with high permeability to water, thereby permitting water to move in the direction of an osmotic gradient. Plays an essential role in renal water homeostasis. Could also be permeable to glycerol. The protein is Aquaporin-2 of Talpa europaea (European mole).